Consider the following 464-residue polypeptide: Putative protein TIC 214 C-terminal part (464 aa).

Belongs to the TIC214 family. Part of the Tic complex.

The protein localises to the plastid. It localises to the chloroplast. Functionally, involved in protein precursor import into chloroplasts. May be part of an intermediate translocation complex acting as a protein-conducting channel at the inner envelope. The sequence is that of Putative protein TIC 214 C-terminal part from Marchantia polymorpha (Common liverwort).